Here is a 275-residue protein sequence, read N- to C-terminus: Tumor necrosis factor receptor superfamily member 14 (275 aa).

Residues 1 to 38 (MEPLPGWGSAPWSQAPTDNTFRLVPCVFLLNLLQRISA) form the signal peptide. 3 TNFR-Cys repeats span residues 41–75 (SCRQ…GTVC), 77–119 (PCPP…DTVC), and 120–162 (RCIP…DTVC). 8 disulfides stabilise this stretch: C42-C53, C54-C67, C57-C75, C78-C93, C96-C111, C99-C119, C121-C138, and C144-C162. N-linked (GlcNAc...) asparagine glycosylation is found at N184 and N197. The helical transmembrane segment at 211 to 231 (VVSILLPLVIVGAGIAGFLIC) threads the bilayer.

This sequence belongs to the tumor necrosis factor receptor superfamily. Interacts with TRAF2, TRAF3 and TRAF5. Interacts (via CRD1/TNFR-Cys 1) with CD160; this interaction is direct. Interacts (via CRD1/TNFR-Cys 1) with BTLA; this interaction is direct. In terms of processing, N-glycosylated. In terms of tissue distribution, expressed at mucosal sites including colon and pulmonary epithelial cells. Expressed in naive T cells.

The protein localises to the cell membrane. Functionally, receptor for four distinct ligands: The TNF superfamily members TNFSF14/LIGHT and homotrimeric LTA/lymphotoxin-alpha and the immunoglobulin superfamily members BTLA and CD160, altogether defining a complex stimulatory and inhibitory signaling network. Signals via the TRAF2-TRAF3 E3 ligase pathway to promote immune cell survival and differentiation. Participates in bidirectional cell-cell contact signaling between antigen presenting cells and lymphocytes. In response to ligation of TNFSF14/LIGHT, delivers costimulatory signals to T cells, promoting cell proliferation and effector functions. Interacts with CD160 on NK cells, enhancing IFNG production and anti-tumor immune response. In the context of bacterial infection, acts as a signaling receptor on epithelial cells for CD160 from intraepithelial lymphocytes, triggering the production of antimicrobial proteins and pro-inflammatory cytokines. Upon binding to CD160 on activated CD4+ T cells, down-regulates CD28 costimulatory signaling, restricting memory and alloantigen-specific immune response. May interact in cis (on the same cell) or in trans (on other cells) with BTLA. In cis interactions, appears to play an immune regulatory role inhibiting in trans interactions in naive T cells to maintain a resting state. In trans interactions, can predominate during adaptive immune response to provide survival signals to effector T cells. This Mus musculus (Mouse) protein is Tumor necrosis factor receptor superfamily member 14.